Consider the following 245-residue polypeptide: Terpene cyclase ausL (245 aa).

7 helical membrane passes run 17-37 (ILAI…VNYI), 51-71 (IGIL…WMFP), 76-96 (HWQG…LVTL), 113-133 (IVFI…ALAA), 138-158 (ALGF…GGIA), 170-190 (SYLI…KLCI), and 206-226 (MCWF…FLYF).

The protein belongs to the paxB family.

It localises to the membrane. It participates in secondary metabolite biosynthesis; terpenoid biosynthesis. In terms of biological role, terpene cyclase; part of the gene cluster A that mediates the biosynthesis of the fungal meroterpenoid acetoxydehydroaustin. The first step of the pathway is the synthesis of 3,5-dimethylorsellinic acid by the polyketide synthase ausA. 3,5-dimethylorsellinic acid is then prenylated by the polyprenyl transferase ausN. Further epoxidation by the FAD-dependent monooxygenase ausM and cyclization by the probable terpene cyclase ausL lead to the formation of protoaustinoid A. Protoaustinoid A is then oxidized to spiro-lactone preaustinoid A3 by the combined action of the FAD-binding monooxygenases ausB and ausC, and the dioxygenase ausE. Acid-catalyzed keto-rearrangement and ring contraction of the tetraketide portion of preaustinoid A3 by ausJ lead to the formation of preaustinoid A4. The aldo-keto reductase ausK, with the help of ausH, is involved in the next step by transforming preaustinoid A4 into isoaustinone which is in turn hydroxylated by the P450 monooxygenase ausI to form austinolide. The cytochrome P450 monooxygenase ausG then modifies austinolide to austinol. Austinol is further acetylated to austin by the O-acetyltransferase ausP, which spontaneously changes to dehydroaustin. The cytochrome P450 monooxygenase then converts dehydroaustin is into 7-dehydrodehydroaustin. The hydroxylation catalyzed by ausR permits the second O-acetyltransferase ausQ to add an additional acetyl group to the molecule, leading to the formation of acetoxydehydroaustin. Due to genetic rearrangements of the clusters and the subsequent loss of some enzymes, the end product of the Penicillium brasilianum austinoid biosynthesis clusters is acetoxydehydroaustin. The protein is Terpene cyclase ausL of Penicillium brasilianum.